We begin with the raw amino-acid sequence, 330 residues long: Aspartate--ammonia ligase (330 aa).

The protein belongs to the class-II aminoacyl-tRNA synthetase family. AsnA subfamily.

The protein resides in the cytoplasm. It catalyses the reaction L-aspartate + NH4(+) + ATP = L-asparagine + AMP + diphosphate + H(+). It functions in the pathway amino-acid biosynthesis; L-asparagine biosynthesis; L-asparagine from L-aspartate (ammonia route): step 1/1. The chain is Aspartate--ammonia ligase from Mannheimia succiniciproducens (strain KCTC 0769BP / MBEL55E).